The following is a 503-amino-acid chain: Intracellular exo-alpha-(1-&gt;5)-L-arabinofuranosidase (503 aa).

Glu-27, Asn-72, and Asn-172 together coordinate alpha-L-arabinofuranose. The active-site Proton donor/acceptor is the Glu-173. Residues Tyr-244, Glu-292, and Gln-352 each coordinate alpha-L-arabinofuranose. The Nucleophile role is filled by Glu-292.

It belongs to the glycosyl hydrolase 51 family. As to quaternary structure, homohexamer; trimer of dimers.

It localises to the cytoplasm. It carries out the reaction Hydrolysis of terminal non-reducing alpha-L-arabinofuranoside residues in alpha-L-arabinosides.. Its pathway is glycan metabolism; L-arabinan degradation. Involved in the degradation of arabinan and is a key enzyme in the complete degradation of the plant cell wall. Catalyzes the cleavage of terminal alpha-(1-&gt;5)-arabinofuranosyl bonds in small oligosaccharides as alpha-(1-&gt;5)-linked arabinobiose/arabinotriose, but does not display significant activity against linear non-substituted arabinan. It is also highly efficient in the cleavage of alpha-(1-&gt;3)-linked arabinoside of xylobiose and of the alpha-(1-&gt;3)-linked arabinoside decorations of polymeric wheat arabinoxylan. It exhibits very low activity against sugar beet arabinan. The protein is Intracellular exo-alpha-(1-&gt;5)-L-arabinofuranosidase of Acetivibrio thermocellus (strain ATCC 27405 / DSM 1237 / JCM 9322 / NBRC 103400 / NCIMB 10682 / NRRL B-4536 / VPI 7372) (Clostridium thermocellum).